The primary structure comprises 327 residues: Probable cell division protein WhiA (327 aa).

The segment at residues 275-308 is a DNA-binding region (H-T-H motif); it reads SLEELGRLADPQMTKDAVAGRIRRLLTMADKRAE.

It belongs to the WhiA family.

Involved in cell division and chromosome segregation. The protein is Probable cell division protein WhiA of Corynebacterium glutamicum (strain R).